The sequence spans 268 residues: UPF0739 protein C1orf74 homolog (268 aa).

It belongs to the UPF0739 family.

The protein is UPF0739 protein C1orf74 homolog of Salmo salar (Atlantic salmon).